A 185-amino-acid polypeptide reads, in one-letter code: UPF0397 protein CPF_1836 (185 aa).

The next 5 membrane-spanning stretches (helical) occupy residues 11-31, 44-64, 71-91, 111-131, and 149-169; these read IVAI…GSLP, AFLA…IGFI, IVFF…VGLI, IFMF…LVAP, and GVIG…ILIA.

It belongs to the UPF0397 family.

It is found in the cell membrane. This is UPF0397 protein CPF_1836 from Clostridium perfringens (strain ATCC 13124 / DSM 756 / JCM 1290 / NCIMB 6125 / NCTC 8237 / Type A).